The following is a 199-amino-acid chain: Molybdenum cofactor guanylyltransferase (199 aa).

Residues 12-14 (LAG), K25, N53, D71, and D101 contribute to the GTP site. Residue D101 coordinates Mg(2+).

It belongs to the MobA family. In terms of assembly, monomer. Requires Mg(2+) as cofactor.

The protein localises to the cytoplasm. The enzyme catalyses Mo-molybdopterin + GTP + H(+) = Mo-molybdopterin guanine dinucleotide + diphosphate. In terms of biological role, transfers a GMP moiety from GTP to Mo-molybdopterin (Mo-MPT) cofactor (Moco or molybdenum cofactor) to form Mo-molybdopterin guanine dinucleotide (Mo-MGD) cofactor. The chain is Molybdenum cofactor guanylyltransferase from Cupriavidus necator (strain ATCC 17699 / DSM 428 / KCTC 22496 / NCIMB 10442 / H16 / Stanier 337) (Ralstonia eutropha).